Consider the following 506-residue polypeptide: MSLAIVHTRAALGVNAPPITIEVHISNGLPGLTMVGLPETTVKEARDRVRSAIINSGYEFPAKKITINLAPADLPKEGGRYDLPIAVALLAASEQLTASNLEAYELVGELALTGALRGVPGAISSATEAIRAGRNIIVATENAAEVGLISKEGCFIADHLQTVCAFLEGKHALERPLAQDMASPTATADLRDVIGQEQGKRGLEITAAGGHNLLLIGPPGTGKTMLASRLSGILPPLSNEEALESAAILSLVNADTVQKRWQQRPFRSPHHSASLTAMVGGGAIPAPGEISLAHNGILFLDELPEFERRTLDALREPIESGQIHLSRTRAKITYPARFQLIAAMNPSPTGHYQGNHNRCTPEQTLRYLNRLSGPFLDRFDLSLEIPLPPPGILSQHASKGESSATVKKRVIAAHERQYRRQKKLNARLEGREIQKYCVLHHDDARWLEDTLVHLGLSIRAWQRLLKVARTIADIELADQISRQHLQEAVSYRAIDRLLIHLQKLLA.

It belongs to the Mg-chelatase subunits D/I family. ComM subfamily.

This is an uncharacterized protein from Salmonella typhimurium (strain LT2 / SGSC1412 / ATCC 700720).